The chain runs to 578 residues: 2-hydroxyacyl-CoA lyase 1 (578 aa).

Phosphoserine is present on S4. A thiamine diphosphate-binding site is contributed by E60. 3 positions are modified to N6-succinyllysine: K351, K358, and K365. The thiamine pyrophosphate binding stretch occupies residues 401 to 486; it reads TMDIGRTVLQ…LLVVNNNGIY (86 aa). 2 residues coordinate Mg(2+): D455 and N482. The Microbody targeting signal signature appears at 576–578; the sequence is SNM.

Belongs to the TPP enzyme family. In terms of assembly, homotetramer. It depends on Mg(2+) as a cofactor. Thiamine diphosphate is required as a cofactor. As to expression, widely expressed.

Its subcellular location is the peroxisome. The enzyme catalyses a 2-hydroxy-3-methyl fatty acyl-CoA = a 2-methyl-branched fatty aldehyde + formyl-CoA. It carries out the reaction an (R)-2-hydroxy-long-chain-fatty acyl-CoA = a long-chain fatty aldehyde + formyl-CoA. It catalyses the reaction 2-hydroxy-3-methylhexadecanoyl-CoA = 2-methylpentadecanal + formyl-CoA. The catalysed reaction is 2-hydroxyoctadecanoyl-CoA = heptadecanal + formyl-CoA. The enzyme catalyses 2-hydroxyphytanoyl-CoA = 2,6,10,14-tetramethylpentadecanal + formyl-CoA. It participates in lipid metabolism; fatty acid metabolism. Functionally, peroxisomal 2-OH acyl-CoA lyase involved in the cleavage (C1 removal) reaction in the fatty acid alpha-oxydation in a thiamine pyrophosphate (TPP)-dependent manner. Involved in the degradation of 3-methyl-branched fatty acids like phytanic acid and the shortening of 2-hydroxy long-chain fatty acids. Plays a significant role in the biosynthesis of heptadecanal in the liver. In Homo sapiens (Human), this protein is 2-hydroxyacyl-CoA lyase 1.